A 108-amino-acid polypeptide reads, in one-letter code: Thiosulfate sulfurtransferase GlpE (108 aa).

The 89-residue stretch at 17–105 (QEKEAVLVDI…WQRQFPAEVA (89 aa)) folds into the Rhodanese domain. Catalysis depends on cysteine 65, which acts as the Cysteine persulfide intermediate.

It belongs to the GlpE family.

It is found in the cytoplasm. It carries out the reaction thiosulfate + hydrogen cyanide = thiocyanate + sulfite + 2 H(+). The enzyme catalyses thiosulfate + [thioredoxin]-dithiol = [thioredoxin]-disulfide + hydrogen sulfide + sulfite + 2 H(+). Functionally, transferase that catalyzes the transfer of sulfur from thiosulfate to thiophilic acceptors such as cyanide or dithiols. May function in a CysM-independent thiosulfate assimilation pathway by catalyzing the conversion of thiosulfate to sulfite, which can then be used for L-cysteine biosynthesis. The polypeptide is Thiosulfate sulfurtransferase GlpE (Escherichia coli O45:K1 (strain S88 / ExPEC)).